The sequence spans 454 residues: Probable DNA primase large subunit (454 aa).

Cys-280, Cys-359, Cys-375, and Cys-415 together coordinate [4Fe-4S] cluster.

The protein belongs to the eukaryotic-type primase large subunit family. In terms of assembly, heterodimer of a small subunit and a large subunit. It depends on [4Fe-4S] cluster as a cofactor.

DNA primase is the polymerase that synthesizes small RNA primers for the Okazaki fragments made during discontinuous DNA replication. In Arabidopsis thaliana (Mouse-ear cress), this protein is Probable DNA primase large subunit.